A 163-amino-acid chain; its full sequence is MVLKTELCRFSGQKIYPGRGIRFIRSDSQVFLFLNSKCKRYFHNKLKPSKLAWTAMYRKQHKKDAAQEAVKRRRRATKKPYSRSIVGATLEVIQKKRAEKPEVRDAAREAALREIKERIKKTKDEKKAKKVEFASKQQKVKANFPKAAAASKGPKVGGGGGKR.

The segment covering 119–133 (IKKTKDEKKAKKVEF) has biased composition (basic and acidic residues). The interval 119–163 (IKKTKDEKKAKKVEFASKQQKVKANFPKAAAASKGPKVGGGGGKR) is disordered.

It belongs to the eukaryotic ribosomal protein eL24 family. As to quaternary structure, interacts with REIL1 and REIL2. Component of the large ribosomal subunit. As to expression, ubiquitous.

The protein resides in the cytoplasm. The protein localises to the nucleus. It is found in the nucleolus. Its subcellular location is the nucleoplasm. In terms of biological role, might have an extraribosomal function in reinitiation of translation of ETTIN and MONOPTEROS genes that are involved in the auxin-mediated gynoecium patterning. Essential in leaf polarity establishment, probably having a role for translation in leaf dorsoventral patterning to specify leaf adaxial identity. This chain is Large ribosomal subunit protein eL24y, found in Arabidopsis thaliana (Mouse-ear cress).